The sequence spans 171 residues: Cytochrome c oxidase subunit 5, mitochondrial (171 aa).

The transit peptide at 1–27 (MLRTPTVSALVRNVAVRAAKPTMAVRA) directs the protein to the mitochondrion. The Mitochondrial matrix portion of the chain corresponds to 28–100 (ASTMPISNPT…ALPPPGEQKK (73 aa)). The helical transmembrane segment at 101-123 (VLAYTVAGVFLSFVIFATMRAFA) threads the bilayer. Residues 124–171 (KPPPATMTKEWQEATNEFLKAQKSDPLTGLTSEGYNGKGHVQSPSASA) lie on the Mitochondrial intermembrane side of the membrane. The segment at 145–171 (QKSDPLTGLTSEGYNGKGHVQSPSASA) is disordered.

Belongs to the cytochrome c oxidase IV family. In terms of assembly, component of the cytochrome c oxidase (complex IV, CIV), a multisubunit enzyme composed of 11 subunits. The complex is composed of a catalytic core of 3 subunits Cox1, Cox2 and Cox3, encoded in the mitochondrial DNA, and 8 supernumerary subunits Cox4, Cox5a/Cox5, Cox6, Cox7, Cox8, Cox7a/Cox9, Cox6b/Cox12 and Cox6a/Cox13, which are encoded in the nuclear genome. The complex exists as a monomer or a dimer and forms respiratory supercomplexes (SCs) in the inner mitochondrial membrane with NADH-ubiquinone oxidoreductase (complex I, CI) and ubiquinol-cytochrome c oxidoreductase (cytochrome b-c1 complex, complex III, CIII), resulting in various different assemblies (supercomplexes I(1)IV(1), I(1)III(3)IV(2), III(2)IV(1) and III(2)IV(2) as well as larger supercomplexes of compositions like I(1)III(2)IV(5-6)).

The protein resides in the mitochondrion inner membrane. The protein operates within energy metabolism; oxidative phosphorylation. Functionally, component of the cytochrome c oxidase, the last enzyme in the mitochondrial electron transport chain which drives oxidative phosphorylation. The respiratory chain contains 3 multisubunit complexes succinate dehydrogenase (complex II, CII), ubiquinol-cytochrome c oxidoreductase (cytochrome b-c1 complex, complex III, CIII) and cytochrome c oxidase (complex IV, CIV), that cooperate to transfer electrons derived from NADH and succinate to molecular oxygen, creating an electrochemical gradient over the inner membrane that drives transmembrane transport and the ATP synthase. Cytochrome c oxidase is the component of the respiratory chain that catalyzes the reduction of oxygen to water. Electrons originating from reduced cytochrome c in the intermembrane space (IMS) are transferred via the dinuclear copper A center (CU(A)) of Cox2 and heme A of Cox1 to the active site in Cox1, a binuclear center (BNC) formed by heme A3 and copper B (CU(B)). The BNC reduces molecular oxygen to 2 water molecules using 4 electrons from cytochrome c in the IMS and 4 protons from the mitochondrial matrix. The sequence is that of Cytochrome c oxidase subunit 5, mitochondrial (cya-4) from Neurospora crassa (strain ATCC 24698 / 74-OR23-1A / CBS 708.71 / DSM 1257 / FGSC 987).